Consider the following 72-residue polypeptide: uncharacterized protein (72 aa).

It belongs to the baculoviridae 8 kDa protein family.

This is an uncharacterized protein from Orgyia pseudotsugata (Douglas-fir tussock moth).